The sequence spans 389 residues: UDP-N-acetylglucosamine--N-acetylmuramyl-(pentapeptide) pyrophosphoryl-undecaprenol N-acetylglucosamine transferase (389 aa).

Residues 39–41 (TGG), Asn-157, Arg-193, Ser-221, Ile-275, 294–299 (ALTVSE), and Gln-320 contribute to the UDP-N-acetyl-alpha-D-glucosamine site.

It belongs to the glycosyltransferase 28 family. MurG subfamily.

It is found in the cell inner membrane. The catalysed reaction is di-trans,octa-cis-undecaprenyl diphospho-N-acetyl-alpha-D-muramoyl-L-alanyl-D-glutamyl-meso-2,6-diaminopimeloyl-D-alanyl-D-alanine + UDP-N-acetyl-alpha-D-glucosamine = di-trans,octa-cis-undecaprenyl diphospho-[N-acetyl-alpha-D-glucosaminyl-(1-&gt;4)]-N-acetyl-alpha-D-muramoyl-L-alanyl-D-glutamyl-meso-2,6-diaminopimeloyl-D-alanyl-D-alanine + UDP + H(+). The protein operates within cell wall biogenesis; peptidoglycan biosynthesis. Its function is as follows. Cell wall formation. Catalyzes the transfer of a GlcNAc subunit on undecaprenyl-pyrophosphoryl-MurNAc-pentapeptide (lipid intermediate I) to form undecaprenyl-pyrophosphoryl-MurNAc-(pentapeptide)GlcNAc (lipid intermediate II). The protein is UDP-N-acetylglucosamine--N-acetylmuramyl-(pentapeptide) pyrophosphoryl-undecaprenol N-acetylglucosamine transferase of Saccharophagus degradans (strain 2-40 / ATCC 43961 / DSM 17024).